The primary structure comprises 4965 residues: Auxin transport protein BIG (4965 aa).

Helical transmembrane passes span 289 to 309 (SDIC…IFSP), 646 to 666 (ACLA…AYEV), and 772 to 792 (LFLI…YEGL). Residues 1383–1425 (TNQESNSTVDCDASSGEEDEDDGTSDGELVSIDRDEEEDGNSE) are disordered. The span at 1397–1407 (SGEEDEDDGTS) shows a compositional bias: acidic residues. The UBR-type zinc-finger motif lies at 1431 to 1502 (KVCTFTSSGS…RGSSCQCLKP (72 aa)). A disordered region spans residues 2437–2456 (DDAPDNHAKASAASNSTTGN). The span at 2445–2456 (KASAASNSTTGN) shows a compositional bias: low complexity. The ZZ-type zinc finger occupies 2469–2528 (SVQYCCDGCSTVPILRRRWHCNICPDFDLCETCYEILDADRLPAPHSRDHPMSAIPIELD). The Zn(2+) site is built by cysteine 2474, cysteine 2477, cysteine 2489, cysteine 2492, cysteine 2498, cysteine 2501, histidine 2514, and histidine 2518. Positions 2997–3037 (NAQKTESGDIGSSTRTGSQSSDSKKKRKGDDSSEGSSEKSC) are disordered. Residues 3007–3017 (GSSTRTGSQSS) are compositionally biased toward low complexity. The span at 3024–3037 (KGDDSSEGSSEKSC) shows a compositional bias: basic and acidic residues. The MYND-type; degenerate zinc finger occupies 3319–3359 (CPRCSRSVTDKHGICSNCHENAYQCRQCRNINYENLDSFLC). The tract at residues 3672–3721 (PKSDSGEKEPGMGKSSLMQAKNDDTVGHSVTNLSTSKTQSELSGKIPDGS) is disordered. The span at 3699-3713 (HSVTNLSTSKTQSEL) shows a compositional bias: polar residues. The interval 4433–4963 (PSIPLILSML…DFVRAIIHGA (531 aa)) is UBR4 E3 catalytic module. A HemiRING-type zinc finger spans residues 4562 to 4681 (GLACMVCREG…WDQLNSLGRA (120 aa)). Residues cysteine 4565, cysteine 4568, histidine 4615, and cysteine 4618 each contribute to the Zn(2+) site. A UZI domain is found at 4684 to 4963 (SRLRLLTYDI…DFVRAIIHGA (280 aa)). The segment covering 4753-4770 (SSSPSTPESPVRLSALSG) has biased composition (low complexity). Disordered stretches follow at residues 4753-4778 (SSSP…SGSS) and 4822-4846 (STLK…ADSN). Polar residues predominate over residues 4824 to 4845 (LKLSADTSSSAVRSDEGSSADS).

It belongs to the UBR4 family.

It is found in the membrane. Functionally, required for auxin efflux and polar auxin transport (PAT) influencing auxin-mediated developmental responses (e.g. cell elongation, apical dominance, lateral root production, inflorescence architecture, general growth and development). The polypeptide is Auxin transport protein BIG (Oryza sativa subsp. japonica (Rice)).